The chain runs to 37 residues: Large ribosomal subunit protein bL36 (37 aa).

Belongs to the bacterial ribosomal protein bL36 family.

The sequence is that of Large ribosomal subunit protein bL36 from Staphylococcus saprophyticus subsp. saprophyticus (strain ATCC 15305 / DSM 20229 / NCIMB 8711 / NCTC 7292 / S-41).